A 159-amino-acid polypeptide reads, in one-letter code: Phosphopantetheine adenylyltransferase (159 aa).

Ser-8 lines the substrate pocket. ATP is bound by residues 8–9 and His-16; that span reads SF. Substrate is bound by residues Lys-40, Val-72, and Arg-86. Residues 87–89, Glu-97, and 122–128 contribute to the ATP site; these read GVR and YAALRSS.

This sequence belongs to the bacterial CoaD family. As to quaternary structure, homohexamer. Mg(2+) serves as cofactor.

The protein localises to the cytoplasm. It catalyses the reaction (R)-4'-phosphopantetheine + ATP + H(+) = 3'-dephospho-CoA + diphosphate. The protein operates within cofactor biosynthesis; coenzyme A biosynthesis; CoA from (R)-pantothenate: step 4/5. Functionally, reversibly transfers an adenylyl group from ATP to 4'-phosphopantetheine, yielding dephospho-CoA (dPCoA) and pyrophosphate. This chain is Phosphopantetheine adenylyltransferase, found in Treponema pallidum (strain Nichols).